A 143-amino-acid chain; its full sequence is 16 kDa calcium-binding protein (143 aa).

4 EF-hand domains span residues Ser2–Cys37, Ala41–Arg71, Lys73–Asp108, and Ile109–Lys143. Asp15, Asp17, Asn19, Glu26, Asp49, Asn51, Asp53, Lys55, Glu60, Asp86, Asp88, Ser90, Lys92, Glu97, Asp122, Asn124, Asp126, Glu128, and Glu133 together coordinate Ca(2+).

As to expression, found in eggs.

Functionally, calcium-binding protein. The protein is 16 kDa calcium-binding protein of Schistosoma mansoni (Blood fluke).